Consider the following 583-residue polypeptide: Bifunctional lycopene cyclase/phytoene synthase (583 aa).

The interval 1-243 (MGFDYALVHL…IVFGQLAFDN (243 aa)) is lycopene beta-cyclase. A run of 7 helical transmembrane segments spans residues 3 to 23 (FDYA…LTWL), 35 to 55 (KVGY…SYLI), 75 to 97 (IPLE…YLLL), 120 to 140 (YMRL…WRCI), 151 to 171 (LILV…YQFI), 173 to 193 (ALPV…LWVV), and 221 to 241 (IEEA…QLAF). The segment at 250-583 (TFPHLFTGPS…MVAWRTLNSK (334 aa)) is phytoene synthase.

It in the N-terminal section; belongs to the lycopene beta-cyclase family. This sequence in the C-terminal section; belongs to the phytoene/squalene synthase family.

Its subcellular location is the membrane. The enzyme catalyses all-trans-lycopene = gamma-carotene. It catalyses the reaction gamma-carotene = all-trans-beta-carotene. It carries out the reaction 2 (2E,6E,10E)-geranylgeranyl diphosphate = 15-cis-phytoene + 2 diphosphate. It functions in the pathway carotenoid biosynthesis; beta-carotene biosynthesis. The protein operates within carotenoid biosynthesis; phytoene biosynthesis; all-trans-phytoene from geranylgeranyl diphosphate: step 1/1. In terms of biological role, bifunctional enzyme that catalyzes the reactions from geranylgeranyl diphosphate to phytoene (phytoene synthase) and lycopene to beta-carotene via the intermediate gamma-carotene (lycopene cyclase). The chain is Bifunctional lycopene cyclase/phytoene synthase from Pyrenophora tritici-repentis (strain Pt-1C-BFP) (Wheat tan spot fungus).